A 491-amino-acid polypeptide reads, in one-letter code: Ketol-acid reductoisomerase (NADP(+)) (491 aa).

In terms of domain architecture, KARI N-terminal Rossmann spans 15–208 (AQLGKCRFMG…GGHRAGVLES (194 aa)). NADP(+) contacts are provided by residues 45–48 (CGAQ), arginine 68, arginine 76, serine 78, and 108–110 (DKQ). The active site involves histidine 132. Glycine 158 lines the NADP(+) pocket. 2 KARI C-terminal knotted domains span residues 209–344 (SFVA…TAPQ) and 345–484 (FEGK…MTDM). Aspartate 217, glutamate 221, glutamate 389, and glutamate 393 together coordinate Mg(2+). Serine 414 lines the substrate pocket.

Belongs to the ketol-acid reductoisomerase family. The cofactor is Mg(2+).

The enzyme catalyses (2R)-2,3-dihydroxy-3-methylbutanoate + NADP(+) = (2S)-2-acetolactate + NADPH + H(+). It carries out the reaction (2R,3R)-2,3-dihydroxy-3-methylpentanoate + NADP(+) = (S)-2-ethyl-2-hydroxy-3-oxobutanoate + NADPH + H(+). The protein operates within amino-acid biosynthesis; L-isoleucine biosynthesis; L-isoleucine from 2-oxobutanoate: step 2/4. It functions in the pathway amino-acid biosynthesis; L-valine biosynthesis; L-valine from pyruvate: step 2/4. Involved in the biosynthesis of branched-chain amino acids (BCAA). Catalyzes an alkyl-migration followed by a ketol-acid reduction of (S)-2-acetolactate (S2AL) to yield (R)-2,3-dihydroxy-isovalerate. In the isomerase reaction, S2AL is rearranged via a Mg-dependent methyl migration to produce 3-hydroxy-3-methyl-2-ketobutyrate (HMKB). In the reductase reaction, this 2-ketoacid undergoes a metal-dependent reduction by NADPH to yield (R)-2,3-dihydroxy-isovalerate. The polypeptide is Ketol-acid reductoisomerase (NADP(+)) (Salmonella agona (strain SL483)).